The chain runs to 316 residues: 4-diphosphocytidyl-2-C-methyl-D-erythritol kinase (316 aa).

Lys32 is an active-site residue. ATP is bound at residue 126–136; the sequence is PVGAGLGGGSA. Asp168 is a catalytic residue.

It belongs to the GHMP kinase family. IspE subfamily.

The enzyme catalyses 4-CDP-2-C-methyl-D-erythritol + ATP = 4-CDP-2-C-methyl-D-erythritol 2-phosphate + ADP + H(+). It functions in the pathway isoprenoid biosynthesis; isopentenyl diphosphate biosynthesis via DXP pathway; isopentenyl diphosphate from 1-deoxy-D-xylulose 5-phosphate: step 3/6. Its function is as follows. Catalyzes the phosphorylation of the position 2 hydroxy group of 4-diphosphocytidyl-2C-methyl-D-erythritol. This chain is 4-diphosphocytidyl-2-C-methyl-D-erythritol kinase, found in Bifidobacterium longum subsp. infantis (strain ATCC 15697 / DSM 20088 / JCM 1222 / NCTC 11817 / S12).